The primary structure comprises 420 residues: Shaggy-related protein kinase delta (420 aa).

Residues 1-61 (MESHLGNGVG…DIIDGVGAEP (61 aa)) are disordered. The span at 10–26 (GSSRSAKNTKNTSSSVD) shows a compositional bias: polar residues. Over residues 28 to 41 (LSRDMLEMKIRDKT) the composition is skewed to basic and acidic residues. Acidic residues predominate over residues 42–53 (EADEERDSEPDI). Residues 82–366 (YIAEHVVGTG…AVEACIHPFF (285 aa)) form the Protein kinase domain. ATP-binding positions include 88-96 (VGTGSFGMV) and lysine 111. Aspartate 207 (proton acceptor) is an active-site residue. Tyrosine 242 carries the phosphotyrosine modification.

The protein belongs to the protein kinase superfamily. CMGC Ser/Thr protein kinase family. GSK-3 subfamily. Post-translationally, autophosphorylated mainly on threonine and serine residues.

It carries out the reaction L-seryl-[protein] + ATP = O-phospho-L-seryl-[protein] + ADP + H(+). The catalysed reaction is L-threonyl-[protein] + ATP = O-phospho-L-threonyl-[protein] + ADP + H(+). In terms of biological role, may mediate extracellular signals to regulate transcription in differentiating cells. This chain is Shaggy-related protein kinase delta (ASK4), found in Arabidopsis thaliana (Mouse-ear cress).